Consider the following 311-residue polypeptide: Probable 5-dehydro-4-deoxyglucarate dehydratase (311 aa).

Belongs to the DapA family.

It carries out the reaction 5-dehydro-4-deoxy-D-glucarate + H(+) = 2,5-dioxopentanoate + CO2 + H2O. It functions in the pathway carbohydrate acid metabolism; D-glucarate degradation; 2,5-dioxopentanoate from D-glucarate: step 2/2. This is Probable 5-dehydro-4-deoxyglucarate dehydratase from Ralstonia nicotianae (strain ATCC BAA-1114 / GMI1000) (Ralstonia solanacearum).